The following is a 271-amino-acid chain: MLYFLPTPIGNLDDISKRCLDVLELCEIIICEDTRVTKSLITLLNAKFGLQISPKEFYSLHTHNEKDFFDKFDKVRLETKICIYASDAGMPCISDPGISLVKFAQQNSIKYEVLSGANALLLAAAASGIIEKEFTFLGFLPNLGKERAIAIQNALNSLYPVIIYESPKRILSLIKSISEFDPLREVFIIKEATKKFEAKFKNSATNLLTQLENSNLNGEWCVVIDRSANKALERITTKDIMELDLPLKQKAKLISKITGENAKKIYQNLIT.

Belongs to the methyltransferase superfamily. RsmI family.

The protein resides in the cytoplasm. It catalyses the reaction cytidine(1402) in 16S rRNA + S-adenosyl-L-methionine = 2'-O-methylcytidine(1402) in 16S rRNA + S-adenosyl-L-homocysteine + H(+). Its function is as follows. Catalyzes the 2'-O-methylation of the ribose of cytidine 1402 (C1402) in 16S rRNA. The sequence is that of Ribosomal RNA small subunit methyltransferase I from Campylobacter fetus subsp. fetus (strain 82-40).